We begin with the raw amino-acid sequence, 637 residues long: MNNQGRSILAWATLFIFVILLFNVFQSDSLLGGRNNITFSDFLTRVDEKTVNSVKIQGRVIEGTSNDGSTFNTYAPDYPDLVNRLTSNDVNIEVVPLETRMNTFLGFLISWFPMLLLIGVWVFFMRQMHGGGKAMGFGKSKARLLSDKGPKITFKDVAGIDEAKEELTEIVDFLRDPSKFQKLGGKIPKGCLLIGPPGTGKTLLAKAIAGEANVPFFSISGSDFVEMFVGVGASRVRDMFEQGKRNAPCIIFIDEIDAVGRHRGIGMGGGNDEREQTLNQMLVEMDGFEANEGVVIIAATNRPDVLDRALLRPGRFDRQIAVANPDINGREQILKVHLKKIKYNSTVLARIIARGTPGFSGAELANLVNEAALIAARLGKKEVDMHDMEEAKDKVLMGVARRSIAMSEKEKRLTAYHEGGHALVGLYCPAASPIHKATIIPRGNALGMVQRLPETDEYSQNREQMESSIAVYMAGRVAEEIIFGRNKVTSGASSDIKGATNIARAMVTKAGLSDLIGPIFHGSSGDDMYGRQPNNETSEATAELIDAEVKRIITQGYEFAKDILTKHIDQLHTLANALIEYETLSGQQIKNLLSGRALDSEEENKFPFNDSSTIKIDKEKSPEKTKTTKAKKENYAS.

Residues 1 to 6 (MNNQGR) lie on the Cytoplasmic side of the membrane. Residues 7–27 (SILAWATLFIFVILLFNVFQS) form a helical membrane-spanning segment. The Periplasmic portion of the chain corresponds to 28-103 (DSLLGGRNNI…VVPLETRMNT (76 aa)). Residues 104 to 124 (FLGFLISWFPMLLLIGVWVFF) traverse the membrane as a helical segment. The Cytoplasmic portion of the chain corresponds to 125–637 (MRQMHGGGKA…TKAKKENYAS (513 aa)). 195-202 (GPPGTGKT) is an ATP binding site. H417 contacts Zn(2+). E418 is a catalytic residue. 2 residues coordinate Zn(2+): H421 and D495. Residues 603–637 (ENKFPFNDSSTIKIDKEKSPEKTKTTKAKKENYAS) are disordered. The span at 615 to 637 (KIDKEKSPEKTKTTKAKKENYAS) shows a compositional bias: basic and acidic residues.

It in the central section; belongs to the AAA ATPase family. This sequence in the C-terminal section; belongs to the peptidase M41 family. In terms of assembly, homohexamer. It depends on Zn(2+) as a cofactor.

The protein resides in the cell inner membrane. Acts as a processive, ATP-dependent zinc metallopeptidase for both cytoplasmic and membrane proteins. Plays a role in the quality control of integral membrane proteins. This Rickettsia conorii (strain ATCC VR-613 / Malish 7) protein is ATP-dependent zinc metalloprotease FtsH.